Consider the following 338-residue polypeptide: tRNA N6-adenosine threonylcarbamoyltransferase (338 aa).

Residues histidine 111 and histidine 115 each contribute to the Fe cation site. Substrate-binding positions include 134 to 138 (LLSGG), aspartate 167, glycine 180, and asparagine 275. Aspartate 304 contacts Fe cation.

The protein belongs to the KAE1 / TsaD family. It depends on Fe(2+) as a cofactor.

The protein resides in the cytoplasm. The catalysed reaction is L-threonylcarbamoyladenylate + adenosine(37) in tRNA = N(6)-L-threonylcarbamoyladenosine(37) in tRNA + AMP + H(+). In terms of biological role, required for the formation of a threonylcarbamoyl group on adenosine at position 37 (t(6)A37) in tRNAs that read codons beginning with adenine. Is involved in the transfer of the threonylcarbamoyl moiety of threonylcarbamoyl-AMP (TC-AMP) to the N6 group of A37, together with TsaE and TsaB. TsaD likely plays a direct catalytic role in this reaction. The sequence is that of tRNA N6-adenosine threonylcarbamoyltransferase from Leptospira borgpetersenii serovar Hardjo-bovis (strain JB197).